The following is a 338-amino-acid chain: 1-aminocyclopropane-1-carboxylate deaminase (338 aa).

Lys-51 is subject to N6-(pyridoxal phosphate)lysine. Ser-78 functions as the Nucleophile in the catalytic mechanism.

It belongs to the ACC deaminase/D-cysteine desulfhydrase family. As to quaternary structure, homotrimer. Requires pyridoxal 5'-phosphate as cofactor.

The catalysed reaction is 1-aminocyclopropane-1-carboxylate + H2O = 2-oxobutanoate + NH4(+). In terms of biological role, catalyzes a cyclopropane ring-opening reaction, the irreversible conversion of 1-aminocyclopropane-1-carboxylate (ACC) to ammonia and alpha-ketobutyrate. Allows growth on ACC as a nitrogen source. The chain is 1-aminocyclopropane-1-carboxylate deaminase from Burkholderia cenocepacia (strain HI2424).